A 193-amino-acid polypeptide reads, in one-letter code: Probable molybdenum cofactor guanylyltransferase (193 aa).

Residues 9–11, Lys21, Asp64, and Asp93 each bind GTP; that span reads TAG. Asp93 is a binding site for Mg(2+).

This sequence belongs to the MobA family. Requires Mg(2+) as cofactor.

It localises to the cytoplasm. It catalyses the reaction Mo-molybdopterin + GTP + H(+) = Mo-molybdopterin guanine dinucleotide + diphosphate. In terms of biological role, transfers a GMP moiety from GTP to Mo-molybdopterin (Mo-MPT) cofactor (Moco or molybdenum cofactor) to form Mo-molybdopterin guanine dinucleotide (Mo-MGD) cofactor. The protein is Probable molybdenum cofactor guanylyltransferase of Deinococcus radiodurans (strain ATCC 13939 / DSM 20539 / JCM 16871 / CCUG 27074 / LMG 4051 / NBRC 15346 / NCIMB 9279 / VKM B-1422 / R1).